Consider the following 988-residue polypeptide: MPGGKRGLVAPQNTFLENIVRRSSESSFLLGNAQIVDWPVVYSNDGFCKLSGYHRADVMQKSSTCSFMYGELTDKKTIEKVRQTFDNYESNCFEVLLYKKNRTPVWFYMQIAPIRNEHEKVVLFLCTFKDITLFKQPIEDDSTKGWTKFARLTRALTNSRSVLQQLTPMNKTEVVHKHSRLAEVLQLGSDILPQYKQEAPKTPPHIILHYCAFKTTWDWVILILTFYTAIMVPYNVSFKTKQNNIAWLVLDSVVDVIFLVDIVLNFHTTFVGPGGEVISDPKLIRMNYLKTWFVIDLLSCLPYDIINAFENVDEGISSLFSSLKVVRLLRLGRVARKLDHYLEYGAAVLVLLVCVFGLVAHWLACIWYSIGDYEVIDEVTNTIQIDSWLYQLALSIGTPYRYNTSAGIWEGGPSKDSLYVSSLYFTMTSLTTIGFGNIAPTTDVEKMFSVAMMMVGSLLYATIFGNVTTIFQQMYANTNRYHEMLNNVRDFLKLYQVPKGLSERVMDYIVSTWSMSKGIDTEKVLSICPKDMRADICVHLNRKVFNEHPAFRLASDGCLRALAVEFQTIHCAPGDLIYHAGESVDALCFVVSGSLEVIQDDEVVAILGKGDVFGDIFWKETTLAHACANVRALTYCDLHIIKREALLKVLDFYTAFANSFSRNLTLTCNLRKRIIFRKISDVKKEEEERLRQKNEVTLSIPVDHPVRKLFQKFKQQKELRNQGSTQGDPERNQLQVESRSLQNGASITGTSVVTVSQITPIQTSLAYVKTSESLKQNNRDAMELKPNGGADQKCLKVNSPIRMKNGNGKGWLRLKNNMGAHEEKKEDWNNVTKAESMGLLSEDPKSSDSENSVTKNPLRKTDSCDSGITKSDLRLDKAGEARSPLEHSPIQADAKHPFYPIPEQALQTTLQEVKHELKEDIQLLSCRMTALEKQVAEILKILSEKSVPQASSPKSQMPLQVPPQIPCQDIFSVSRPESPESDKDEIHF.

Residues 1 to 217 (MPGGKRGLVA…LHYCAFKTTW (217 aa)) lie on the Cytoplasmic side of the membrane. One can recognise a PAS domain in the interval 12–90 (QNTFLENIVR…VRQTFDNYES (79 aa)). The 53-residue stretch at 91-143 (NCFEVLLYKKNRTPVWFYMQIAPIRNEHEKVVLFLCTFKDITLFKQPIEDDST) folds into the PAC domain. A helical membrane pass occupies residues 218 to 238 (DWVILILTFYTAIMVPYNVSF). At 239–243 (KTKQN) the chain is on the extracellular side. A helical transmembrane segment spans residues 244–264 (NIAWLVLDSVVDVIFLVDIVL). Residues 265-291 (NFHTTFVGPGGEVISDPKLIRMNYLKT) are Cytoplasmic-facing. The helical transmembrane segment at 292-312 (WFVIDLLSCLPYDIINAFENV) threads the bilayer. Residues 313–319 (DEGISSL) are Extracellular-facing. A helical; Voltage-sensor membrane pass occupies residues 320 to 340 (FSSLKVVRLLRLGRVARKLDH). Topologically, residues 341–346 (YLEYGA) are cytoplasmic. The chain crosses the membrane as a helical span at residues 347 to 367 (AVLVLLVCVFGLVAHWLACIW). At 368–419 (YSIGDYEVIDEVTNTIQIDSWLYQLALSIGTPYRYNTSAGIWEGGPSKDSLY) the chain is on the extracellular side. N-linked (GlcNAc...) asparagine glycosylation is present at asparagine 403. The pore-forming intramembrane region spans 420–440 (VSSLYFTMTSLTTIGFGNIAP). Residues 432–437 (TIGFGN) carry the Selectivity filter motif. Over 441 to 446 (TTDVEK) the chain is Extracellular. A helical transmembrane segment spans residues 447–467 (MFSVAMMMVGSLLYATIFGNV). The Cytoplasmic segment spans residues 468–988 (TTIFQQMYAN…PESDKDEIHF (521 aa)). 550-667 (AFRLASDGCL…NSFSRNLTLT (118 aa)) contacts a nucleoside 3',5'-cyclic phosphate. The tract at residues 704–715 (HPVRKLFQKFKQ) is calmodulin-binding. A disordered region spans residues 717-742 (KELRNQGSTQGDPERNQLQVESRSLQ). Polar residues predominate over residues 721–742 (NQGSTQGDPERNQLQVESRSLQ). A Glycyl lysine isopeptide (Lys-Gly) (interchain with G-Cter in ubiquitin) cross-link involves residue lysine 785. Positions 838–890 (GLLSEDPKSSDSENSVTKNPLRKTDSCDSGITKSDLRLDKAGEARSPLEHSPI) are disordered. Residues 871–885 (SDLRLDKAGEARSPL) are compositionally biased toward basic and acidic residues. A Phosphoserine modification is found at serine 883. Positions 909–948 (TLQEVKHELKEDIQLLSCRMTALEKQVAEILKILSEKSVP) are CAD (involved in subunit assembly). Positions 969–988 (DIFSVSRPESPESDKDEIHF) are disordered. Positions 977–988 (ESPESDKDEIHF) are enriched in basic and acidic residues.

This sequence belongs to the potassium channel family. H (Eag) (TC 1.A.1.20) subfamily. Kv10.2/KCNH5 sub-subfamily. Homotetramer. The potassium channel is probably composed of a homo- or heterotetrameric complex of pore-forming alpha subunits that can associate with modulating beta subunits. Heteromultimer with KCNH1/EAG. In terms of tissue distribution, detected in brain, skeletal muscle, heart, placenta, lung and liver, and at low levels in kidney.

It is found in the membrane. The catalysed reaction is K(+)(in) = K(+)(out). In terms of biological role, pore-forming (alpha) subunit of a voltage-gated delayed rectifier potassium channel that mediates outward-rectifying potassium currents which, on depolarization, reaches a steady-state level and do not inactivate. The kinetic is characterized by a slow activation time course and a small voltage dependence of the activation time constants, therefore, starts to open at more negative voltages. The activation kinetics depend on the prepulse potential and external divalent cation concentration. The time course of activation is biphasic with a fast and a slowly activating current component. With negative prepulses, the current activation is delayed and slowed down several fold, whereas more positive prepulses speed up activation, therefore the activation rate depends on holding potential. This chain is Voltage-gated delayed rectifier potassium channel KCNH5, found in Homo sapiens (Human).